Reading from the N-terminus, the 164-residue chain is Arginine repressor (164 aa).

Belongs to the ArgR family.

The protein localises to the cytoplasm. Its pathway is amino-acid biosynthesis; L-arginine biosynthesis [regulation]. In terms of biological role, regulates arginine biosynthesis genes. This Thermus thermophilus (strain ATCC BAA-163 / DSM 7039 / HB27) protein is Arginine repressor.